Here is a 136-residue protein sequence, read N- to C-terminus: Large-conductance mechanosensitive channel (136 aa).

2 helical membrane passes run 9–29 and 78–98; these read AFAV…GAAF and FIQT…GVKA.

Belongs to the MscL family. In terms of assembly, homopentamer.

It localises to the cell inner membrane. Channel that opens in response to stretch forces in the membrane lipid bilayer. May participate in the regulation of osmotic pressure changes within the cell. The chain is Large-conductance mechanosensitive channel from Azotobacter vinelandii (strain DJ / ATCC BAA-1303).